Here is a 623-residue protein sequence, read N- to C-terminus: Protein Atg16l2 (623 aa).

The span at 64-79 shows a compositional bias: basic and acidic residues; that stretch reads PKDAISTRHEDWREEV. Positions 64–93 are disordered; the sequence is PKDAISTRHEDWREEVSGTGPDQVSSPASL. Positions 116 to 229 form a coiled coil; that stretch reads VKKSAALDTL…ANQALVSQEL (114 aa). WD repeat units lie at residues 338–377, 382–421, 424–458, 459–502, 504–543, 550–589, and 593–623; these read AHLS…LEAN, GAGG…SKET, GHKD…LGRA, YCSR…CIQV, PVQG…IRQV, KCSS…LETS, and PHCT…VLWH.

The protein belongs to the WD repeat ATG16 family. Homooligomer. Heterooligomer with ATG16L2. Interacts with ATG5. Self-oligomerizes to form a 800-kDa complex composed of ATG12-ATG5 and ATG16L2. Interacts with RAB33B. Widely expressed.

Its subcellular location is the cytoplasm. It localises to the cytosol. In terms of biological role, may play a role in regulating epithelial homeostasis in an ATG16L1-dependent manner. This Mus musculus (Mouse) protein is Protein Atg16l2 (Atg16l2).